The chain runs to 439 residues: UDP-N-acetylglucosamine--peptide N-acetylglucosaminyltransferase stabilizing protein GtfB (439 aa).

This sequence belongs to the GtfB family. As to quaternary structure, interacts with glycosyltransferase GtfA (Gtf2); probably forms a heterotetramer with 2 subunits each of GtfA and GtfB. Part of the accessory SecA2/SecY2 protein translocation apparatus.

The protein localises to the cell membrane. Its pathway is protein modification; protein glycosylation. Functionally, required for the polymorphic O-glycosylation of the serine-rich repeat protein Fap1. A stabilizing protein that is part of the accessory SecA2/SecY2 system specifically required to export Fap1, a serine-rich fimbrial adhesin encoded upstream in the same operon. The GtfA-GtfB (Gtf1-Gtf2 in this bacteria) complex adds GlcNAc from UDP-GlcNAc to Fap1, attaching the first sugar residue. Cannot use not UDP-Glc as substrate. Stabilizes the glycosylation activity of GtfA, causing it to partially localize to the cellular membrane where it is more protease resistant. In Streptococcus parasanguinis, this protein is UDP-N-acetylglucosamine--peptide N-acetylglucosaminyltransferase stabilizing protein GtfB.